The following is a 222-amino-acid chain: UPF0128 protein PYRAB08320 (222 aa).

This sequence belongs to the UPF0128 family.

The polypeptide is UPF0128 protein PYRAB08320 (Pyrococcus abyssi (strain GE5 / Orsay)).